The primary structure comprises 350 residues: L-threonine 3-dehydrogenase (350 aa).

A Zn(2+)-binding site is contributed by cysteine 42. Residues threonine 44 and histidine 47 each act as charge relay system in the active site. Positions 67, 68, 97, 100, 103, and 111 each coordinate Zn(2+). NAD(+) is bound by residues leucine 179, glutamate 199, arginine 204, 266 to 268, and 291 to 292; these read LGL and IT.

This sequence belongs to the zinc-containing alcohol dehydrogenase family. As to quaternary structure, homotetramer. Requires Zn(2+) as cofactor.

It localises to the cytoplasm. It catalyses the reaction L-threonine + NAD(+) = (2S)-2-amino-3-oxobutanoate + NADH + H(+). It functions in the pathway amino-acid degradation; L-threonine degradation via oxydo-reductase pathway; glycine from L-threonine: step 1/2. Functionally, catalyzes the NAD(+)-dependent oxidation of L-threonine to 2-amino-3-ketobutyrate. To a lesser extent, also catalyzes the oxidation of L-serine. The sequence is that of L-threonine 3-dehydrogenase from Thermococcus kodakarensis (strain ATCC BAA-918 / JCM 12380 / KOD1) (Pyrococcus kodakaraensis (strain KOD1)).